A 55-amino-acid chain; its full sequence is Small ribosomal subunit protein uS14 (55 aa).

A disordered region spans residues 1 to 20 (MSFEPSGPHSHRKPFGKGSR). Zn(2+) is bound by residues Cys-22, Cys-25, Cys-38, and Cys-41.

It belongs to the universal ribosomal protein uS14 family. Requires Zn(2+) as cofactor.

This is Small ribosomal subunit protein uS14 (RPS29) from Encephalitozoon cuniculi (strain GB-M1) (Microsporidian parasite).